Here is a 284-residue protein sequence, read N- to C-terminus: Dihydropteroate synthase (284 aa).

The 260-residue stretch at 6 to 265 (VQVIGVLNVT…DVRASVDALK (260 aa)) folds into the Pterin-binding domain. Asparagine 13 provides a ligand contact to Mg(2+). (7,8-dihydropterin-6-yl)methyl diphosphate is bound by residues threonine 53, aspartate 86, asparagine 105, aspartate 177, lysine 213, and 253–255 (RVH).

This sequence belongs to the DHPS family. Homodimer. Mg(2+) serves as cofactor.

The enzyme catalyses (7,8-dihydropterin-6-yl)methyl diphosphate + 4-aminobenzoate = 7,8-dihydropteroate + diphosphate. The protein operates within cofactor biosynthesis; tetrahydrofolate biosynthesis; 7,8-dihydrofolate from 2-amino-4-hydroxy-6-hydroxymethyl-7,8-dihydropteridine diphosphate and 4-aminobenzoate: step 1/2. Is potently inhibited by the sulfone dapsone and the two sulfonamides sulfamethoxazole and sulfamethoxypyridazine, with Kis in the range of 12 to 32 nM. To a lesser extent, is also inhibited by p-aminosalicylate (PAS). Catalyzes the condensation of para-aminobenzoate (pABA) with 6-hydroxymethyl-7,8-dihydropterin diphosphate (DHPt-PP) to form 7,8-dihydropteroate, the immediate precursor of folate derivatives. This Mycobacterium leprae (strain TN) protein is Dihydropteroate synthase (folP1).